We begin with the raw amino-acid sequence, 101 residues long: Apolipoprotein C-III (101 aa).

An N-terminal signal peptide occupies residues 1–20 (MQPRMLLIVALVALLASARA). M64 carries the post-translational modification Methionine sulfoxide. The segment at 69–101 (KSLKGYWSKFTDKFTGLWESGPEDQLTTPTLEP) is lipid-binding. The O-linked (GalNAc...) threonine glycan is linked to T96.

It belongs to the apolipoprotein C3 family. Post-translationally, the most abundant glycoforms are characterized by an O-linked disaccharide galactose linked to N-acetylgalactosamine (Gal-GalNAc), further modified with up to 3 sialic acid residues. Less abundant glycoforms are characterized by more complex and fucosylated glycan moieties. O-glycosylated on Thr-96 with a core 1 or possibly core 8 glycan. Synthesized predominantly in liver and to a lesser degree in intestine.

The protein resides in the secreted. In terms of biological role, component of triglyceride-rich very low density lipoproteins (VLDL) and high density lipoproteins (HDL) in plasma. Plays a multifaceted role in triglyceride homeostasis. Intracellularly, promotes hepatic very low density lipoprotein 1 (VLDL1) assembly and secretion; extracellularly, attenuates hydrolysis and clearance of triglyceride-rich lipoproteins (TRLs). Impairs the lipolysis of TRLs by inhibiting lipoprotein lipase and the hepatic uptake of TRLs by remnant receptors. Formed of several curved helices connected via semiflexible hinges, so that it can wrap tightly around the curved micelle surface and easily adapt to the different diameters of its natural binding partners. The sequence is that of Apolipoprotein C-III (Apoc3) from Rattus norvegicus (Rat).